A 114-amino-acid polypeptide reads, in one-letter code: Small ribosomal subunit protein bS6 (114 aa).

The protein belongs to the bacterial ribosomal protein bS6 family.

In terms of biological role, binds together with bS18 to 16S ribosomal RNA. The polypeptide is Small ribosomal subunit protein bS6 (Bacteroides fragilis (strain YCH46)).